Reading from the N-terminus, the 75-residue chain is Protein Tlp homolog (75 aa).

Positions 48 to 75 are disordered; that stretch reads KNQRRREALDGMREEIKDEARDKKNGYM.

The protein belongs to the Tlp family.

The sequence is that of Protein Tlp homolog from Clostridium botulinum (strain 657 / Type Ba4).